The following is a 63-amino-acid chain: Small ribosomal subunit protein eS17 (63 aa).

Belongs to the eukaryotic ribosomal protein eS17 family.

In Methanococcus vannielii (strain ATCC 35089 / DSM 1224 / JCM 13029 / OCM 148 / SB), this protein is Small ribosomal subunit protein eS17.